The chain runs to 523 residues: Cytochrome P450 monooxygenase ple1 (523 aa).

The chain crosses the membrane as a helical span at residues 9–29; it reads ALPVLAIWAAIGLAYWIDSQK. Asn141 carries an N-linked (GlcNAc...) asparagine glycan. Heme is bound at residue Cys444.

Belongs to the cytochrome P450 family. Heme serves as cofactor.

It localises to the membrane. The protein operates within secondary metabolite biosynthesis; terpenoid biosynthesis. Its function is as follows. Cytochrome P450 monooxygenase; part of the gene cluster that mediates the biosynthesis of pleuromutilin, a tricyclic diterpene showing antibacterial properties. The geranylgeranyl diphosphate (GGPP) synthase ple4 catalyzes the first step in pleuromutilin biosynthesis. GGPP is then substrate of the premutilin synthase (PS) ple3 to yield premutilin. Premutilin synthase is a bifunctional enzyme composed of the fusion of a class II diterpene cyclase (DTC) and a class I diterpene synthase (DTS), with the corresponding domains and active sites containing characteristic aspartate-rich motifs. GGPP is first converted to mutildienyl-diphosphate (MPP) at the class II DTC site. MPP is subsequently further cyclized at the class I DTS site, followed by a 1,5-hydride shift and addition of water prior to terminating deprotonation, to yield premutilin. The cytochrome P450 monooxygenases ple5 and ple6 hydroxylate premutilin at C-11 and C-3, respectively, producing 11-hydroxypremutilin and 3-hydroxypremutilin. The combination of the actions of both ple5 and ple6 leads to the production of 3,11-dihydroxypremutilin. The short chain dehydrogenase ple7 further converts 3,11-dihydroxypremutilin into mutilin. The acetyltransferase ple2 then acetylates mutilin to produce 14-O-acetylmutilin. Finally, the cytochrome P450 monooxygenase ple1 catalyzes hydroxylation on the alpha position of the acetyl side chain of 14-O-acetylmutilin to yield pleuromutilin. The polypeptide is Cytochrome P450 monooxygenase ple1 (Rhodocybe pseudopiperita (Clitopilus pseudopiperitus)).